Here is a 284-residue protein sequence, read N- to C-terminus: L-ribulose-5-phosphate 3-epimerase UlaE (284 aa).

This sequence belongs to the L-ribulose-5-phosphate 3-epimerase family.

The catalysed reaction is L-ribulose 5-phosphate = L-xylulose 5-phosphate. Its pathway is cofactor degradation; L-ascorbate degradation; D-xylulose 5-phosphate from L-ascorbate: step 3/4. Catalyzes the isomerization of L-xylulose-5-phosphate to L-ribulose-5-phosphate. Is involved in the anaerobic L-ascorbate utilization. The protein is L-ribulose-5-phosphate 3-epimerase UlaE of Salmonella typhi.